The following is a 551-amino-acid chain: Bestrophin-1 (551 aa).

The Cytoplasmic portion of the chain corresponds to 1-31 (MTITYTNKVANARLGSFSSLLLCWRGSIYKL). Residue alanine 10 coordinates Ca(2+). The helical transmembrane segment at 32 to 51 (LYGEFLVFIFLYYSIRGLYR) threads the bilayer. Residues 52–60 (MVLSSDQQL) lie on the Extracellular side of the membrane. A helical transmembrane segment spans residues 61 to 82 (LFEKLALYCDSYIQLIPISFVL). The Cytoplasmic segment spans residues 83-237 (GFYVTLVVSR…DWISIPLVYT (155 aa)). Residues 238–255 (QVVTVAVYSFFLACLIGR) form a helical membrane-spanning segment. Over 256 to 274 (QFLNPNKDYPGHEMDLVVP) the chain is Extracellular. Residues 275–288 (VFTILQFLFYMGWL) form a helical membrane-spanning segment. The Cytoplasmic portion of the chain corresponds to 289–551 (KVAEQLINPF…EAGTKPVLYE (263 aa)). The Ca(2+) site is built by glutamine 293, asparagine 296, aspartate 301, and aspartate 304. An auto-inhibitory segment region spans residues 346 to 379 (PYTAASARSRRHSFMGSTFNISLKKEDLELWSKE). Residues 459 to 489 (SHCGPQAPSSHPTEQSAPSSSDTGDGPSTDY) are disordered. Residues 465–475 (APSSHPTEQSA) are compositionally biased toward polar residues. Over residues 476-488 (PSSSDTGDGPSTD) the composition is skewed to low complexity.

The protein belongs to the anion channel-forming bestrophin (TC 1.A.46) family. Calcium-sensitive chloride channel subfamily. In terms of assembly, interacts with YWHAG; this interaction promotes the ligand-gated L-glutamate channel activity leading to the positive regulation of NMDA glutamate receptor activity through the L-glutamate secretion.

Its subcellular location is the cell membrane. The protein localises to the basolateral cell membrane. The enzyme catalyses 4-aminobutanoate(in) = 4-aminobutanoate(out). The catalysed reaction is L-glutamate(out) = L-glutamate(in). It carries out the reaction chloride(in) = chloride(out). It catalyses the reaction hydrogencarbonate(in) = hydrogencarbonate(out). The enzyme catalyses D-serine(in) = D-serine(out). Inactivated by sulfhydryl-reactive agents. Functionally, ligand-gated anion channel that allows the movement of anions across cell membranes when activated by calcium (Ca2+). Allows the movement of chloride and hydrogencarbonate. Found in a partially open conformation leading to significantly smaller chloride movement. Upon F2R/PAR-1 activation, the sequestered calcium is released into the cytosol of astrocytes, leading to the (Ca2+)-dependent release of L-glutamate into the synaptic cleft that targets the neuronal postsynaptic GRIN2A/NMDAR receptor resulting in the synaptic plasticity regulation. Upon activation of the norepinephrine-alpha-1 adrenergic receptor signaling pathway, transports as well D-serine than L-glutamate in a (Ca2+)-dependent manner, leading to activation of adjacent NMDAR receptors and therefore regulates the heterosynaptic long-term depression and metaplasticity during initial memory acquisition. Releases the 4-aminobutanoate neurotransmitter in a (Ca2+)-dependent manner, and participates in its tonic release from cerebellar glial cells. The polypeptide is Bestrophin-1 (Mus musculus (Mouse)).